The following is a 1687-amino-acid chain: MEPAAAAPAQRLADPTGEDQALAAAAAEGGRCPDPALSAAAPSGGNGGAAREEAPCEAPPGPLPGRAGGTGRRRRRGAPQPAAGGAAPVPAAGGGANSLLLKRGRLKRNLSAAAAASSSSSPSSASSAAGGLPASCSASASLCTRSLDRKTLLLKHRQLLQLQPSDRDWVRHQLQRGCVHVFDRHMASSYLRPVLCTLDTTAAEVAARLLQLGHKGGGVVKVLGYGPPPAAAPAASDQTLDGEHGRDVEPPPSSGTVGAVRGPARAPPADLPLPGGAWTRCAPRISPAPSDSSPGELFAGGPGSPPRAPRPASDTESFSLSPSAESVSDRLDPYSSGGGGSSSSSEELEADPAMPHRPGRPAQPRPPSPKTSALLQPKAPTGVDSTGVIAGEGPGDDKAMAAAAPDVPLSTSGRIRETVQKTSPPSLYVQLHGETTRRLEADEKPLQIQNDYLFQLGFGELWRVQEEGMDSEIGCLIRFYAGKPHSTGSSERIQLSGMYNVRKGKMQLPVNRWTRRQVILCGTCLIVSSVKDSVSGKMHVLPLIGGKVEEVKKHQHCLAFSSSGPQSQTYYICFDTFTEYLRWLRQVSKVASQRISSVDLSCCSLEHLPANLFYSQDLTHLNLKQNFLRQTPTLPAARGLGELQRFTKLKSLNLSNNHLGAFPSAVCSIPTLAELNVSCNALREVPAAVGDMQNLQTFLLDGNFLQSLPAELESMHQLSYLGLSFNEFTDIPEVLEKLTAVDKLCMAGNCVETLRLQALRRMPHIKHVDLRLNILRKLMADEVDFVQHVTQLDLRDNKLGDLDAMIFNNIEVLHCERNQLVTLNVCGYFLKALYASSNELAQLDVYPVPNYLSYMDVSRNCLESVPEWVCESRKLEVLDIGHNQICELPARLFCNSSLRKLLAGHNRLARLPERLERTSVEVLDVQHNQITELPPNLLMKADSLRFLNASANKLETLPPATLSEETSSILQELYLTNNCLTDKCVPLLTGHPRLKILHMAYNRLQSFPASKMAKLEELEEIDISGNKLKAIPTTIMNCRRMHTVIAHSNCIEVFPEVMQLPEVKCVDLSCNELSEITLPENLPPKLQELDLTGNPRLALDHKSLELLNNIRCFKIDQPSAGDASGAPAVWSHGYTEASGVKNKLCVAALSVNNFRDNREALYGVFDGDRNVEVPYLLQCTMSDILAEELQKTKNEEEYMVNTFIVMQRKLGTAGQKLGGAAVLCHIKPDPVDLGGSFTLTSANVGKCQTVLCRNGKPLSLSRSYIMSCEEERKRIKQHKAIITEDGKVNGVTESTRILGYTFLHPSVVPRPHVQSVLLTPQDEFFILGSKGLWDSLSIDEAVEAVRNVPDALAAAKKLCTLAQSYGCHDSISAVVVQLSVTEDSFCCCELSAGGSMPPPSPGIFPPSVNMVIKDRPSDGLGVPSSSSGMASEISSELSTSEMSSEVGSTASDEPPSGVLNESSPAYPNEQRCMLHPVCLSNSFQRQLSSATFSSAFSDNGLDSDDEEPIEGVFSNGSRVEVEVDIHCSRAKEKERQQHLLQVPAEASDEGIVISANEDESGLSKKADFSAVGTIGRRRANGSVAPQERSHNVIEVAADAPLRKPGGYFAAPAQPDPDDQFIIPPELEEEVKEIMKHHQEQQQQQQQQQLPPPPQPPQPQPQPQPQPQPQPQRHFQMDHLPDCYDTPL.

Methionine 1 carries the N-acetylmethionine modification. Disordered regions lie at residues 1 to 96 (MEPA…GGGA) and 230 to 406 (AAAP…AAPD). Residues 78-96 (APQPAAGGAAPVPAAGGGA) are compositionally biased toward low complexity. Position 286 is a phosphoserine (serine 286). Over residues 314–326 (DTESFSLSPSAES) the composition is skewed to polar residues. A Phosphoserine modification is found at serine 372. The region spanning 492-592 (RIQLSGMYNV…WLRQVSKVAS (101 aa)) is the PH domain. LRR repeat units lie at residues 594 to 615 (RISSVDLSCCSLEHLPANLFYS), 617 to 638 (DLTHLNLKQNFLRQTPTLPAAR), 648 to 669 (KLKSLNLSNNHLGAFPSAVCSI), 671 to 692 (TLAELNVSCNALREVPAAVGDM), 694 to 715 (NLQTFLLDGNFLQSLPAELESM), 717 to 739 (QLSYLGLSFNEFTDIPEVLEKLT), 740 to 760 (AVDKLCMAGNCVETLRLQALR), 764 to 785 (HIKHVDLRLNILRKLMADEVDF), 788 to 809 (HVTQLDLRDNKLGDLDAMIFNN), 829 to 850 (FLKALYASSNELAQLDVYPVPN), 851 to 872 (YLSYMDVSRNCLESVPEWVCES), 874 to 895 (KLEVLDIGHNQICELPARLFCN), 897 to 918 (SLRKLLAGHNRLARLPERLERT), 919 to 940 (SVEVLDVQHNQITELPPNLLMK), 943 to 964 (SLRFLNASANKLETLPPATLSE), 969 to 989 (ILQELYLTNNCLTDKCVPLLT), 993 to 1014 (RLKILHMAYNRLQSFPASKMAK), 1017 to 1038 (ELEEIDISGNKLKAIPTTIMNC), 1040 to 1061 (RMHTVIAHSNCIEVFPEVMQLP), 1062 to 1083 (EVKCVDLSCNELSEITLPENLP), and 1085 to 1106 (KLQELDLTGNPRLALDHKSLEL). The region spanning 1131 to 1378 (SHGYTEASGV…DSISAVVVQL (248 aa)) is the PPM-type phosphatase domain. Mn(2+) is bound by residues aspartate 1166, glycine 1167, lysine 1330, and aspartate 1369. Disordered stretches follow at residues 1414-1465 (DRPS…SSPA) and 1604-1687 (PGGY…DTPL). Low complexity predominate over residues 1424-1445 (SSSSGMASEISSELSTSEMSSE). Pro residues predominate over residues 1649 to 1669 (LPPPPQPPQPQPQPQPQPQPQ). Positions 1685–1687 (TPL) match the PDZ-binding motif.

In terms of assembly, interacts with the nucleotide free form of K-Ras (KRAS) via its LRR repeats. Interacts with AKT2, AKT3 and PRKCB. Interacts with WDR48 and USP12. The cofactor is Mn(2+). As to expression, isoforms 1 and 2 are expressed in the retina.

Its subcellular location is the cytoplasm. It is found in the membrane. The protein resides in the nucleus. The catalysed reaction is O-phospho-L-seryl-[protein] + H2O = L-seryl-[protein] + phosphate. The enzyme catalyses O-phospho-L-threonyl-[protein] + H2O = L-threonyl-[protein] + phosphate. Insensitive to okadaic acid. Deubiquitination by WDR48-USP12 complex positively regulates PHLPP1 stability. Its function is as follows. Protein phosphatase involved in regulation of Akt and PKC signaling. Mediates dephosphorylation in the C-terminal domain hydrophobic motif of members of the AGC Ser/Thr protein kinase family; specifically acts on 'Ser-473' of AKT2 and AKT3, 'Ser-660' of PRKCB and 'Ser-657' of PRKCA. Isoform 2 seems to have a major role in regulating Akt signaling in hippocampal neurons. Akt regulates the balance between cell survival and apoptosis through a cascade that primarily alters the function of transcription factors that regulate pro- and antiapoptotic genes. Dephosphorylation of 'Ser-473' of Akt triggers apoptosis and suppression of tumor growth. Dephosphorylation of PRKCA and PRKCB leads to their destabilization and degradation. Dephosphorylates STK4 on 'Thr-387' leading to STK4 activation and apoptosis. Dephosphorylates RPS6KB1 and is involved in regulation of cap-dependent translation. Inhibits cancer cell proliferation and may act as a tumor suppressor. Dephosphorylates RAF1 inhibiting its kinase activity. May act as a negative regulator of K-Ras signaling in membrane rafts. Involved in the hippocampus-dependent long-term memory formation. Involved in circadian control by regulating the consolidation of circadian periodicity after resetting. Involved in development and function of regulatory T-cells. The sequence is that of PH domain leucine-rich repeat-containing protein phosphatase 1 (Phlpp1) from Mus musculus (Mouse).